A 400-amino-acid chain; its full sequence is Elongation factor Tu 1 (400 aa).

A tr-type G domain is found at 10–209 (KPHLNIGTIG…AVDSYIPLPQ (200 aa)). The G1 stretch occupies residues 19–26 (GHIDHGKT). GTP is bound at residue 19–26 (GHIDHGKT). Mg(2+) is bound at residue threonine 26. Residues 60–64 (GITIN) form a G2 region. Residues 81 to 84 (DCPG) form a G3 region. GTP is bound by residues 81–85 (DCPGH) and 136–139 (NKTD). Residues 136–139 (NKTD) form a G4 region. The G5 stretch occupies residues 174-176 (SAL).

This sequence belongs to the TRAFAC class translation factor GTPase superfamily. Classic translation factor GTPase family. EF-Tu/EF-1A subfamily. In terms of assembly, monomer.

It localises to the cytoplasm. The enzyme catalyses GTP + H2O = GDP + phosphate + H(+). Its function is as follows. GTP hydrolase that promotes the GTP-dependent binding of aminoacyl-tRNA to the A-site of ribosomes during protein biosynthesis. The polypeptide is Elongation factor Tu 1 (Syntrophomonas wolfei subsp. wolfei (strain DSM 2245B / Goettingen)).